The primary structure comprises 853 residues: Replication protein A 70 kDa DNA-binding subunit C (853 aa).

A disordered region spans residues 118 to 282 (PKEPGHSSIN…QSAYQPQQPP (165 aa)). 6 stretches are compositionally biased toward polar residues: residues 124-144 (SSINPQRGGVNTQSNGGSEQQ), 159-173 (SANSPQPQVVHNSSD), 180-194 (SANSPQPQVVHSSSD), 201-211 (SANSPQRQVVH), 222-249 (PQVSQRYGTGSGYPETSPSTRPYVSSNA), and 263-278 (TATTAYSRPVQSAYQP). Residues 312–399 (WTIKVRVTSK…NDYEIHLDSA (88 aa)) constitute a DNA-binding region (OB). The segment at 602-628 (CPIMNGDRPCSKKVTNNGDGTWRCEKC) adopts a C4-type zinc-finger fold.

The protein belongs to the replication factor A protein 1 family. Heterotrimer of RPA1, RPA2 and RPA3 (canonical replication protein A complex).

Its subcellular location is the nucleus. Component of the replication protein A complex (RPA) required for DNA recombination, repair and replication. The activity of RPA is mediated by single-stranded DNA binding and protein interactions. Probably involved in repair of double-strand DNA breaks (DSBs) induced by genotoxic stresses. This chain is Replication protein A 70 kDa DNA-binding subunit C (RPA1C), found in Arabidopsis thaliana (Mouse-ear cress).